A 156-amino-acid polypeptide reads, in one-letter code: Small ribosomal subunit protein uS7 (156 aa).

This sequence belongs to the universal ribosomal protein uS7 family. In terms of assembly, part of the 30S ribosomal subunit. Contacts proteins S9 and S11.

Functionally, one of the primary rRNA binding proteins, it binds directly to 16S rRNA where it nucleates assembly of the head domain of the 30S subunit. Is located at the subunit interface close to the decoding center, probably blocks exit of the E-site tRNA. The chain is Small ribosomal subunit protein uS7 from Hahella chejuensis (strain KCTC 2396).